Consider the following 192-residue polypeptide: MTETLETPVKIVPRLKTKYAETIKKSLQDEFSYANVNQVPRLVKVVVNMGVGDAAKDSKLIDGAVRDLTLITGQKPQVTKARKSIAQFKLREGMPIGAHATLRGDRMWEFVDRLVSLALPRIRDFRGLNGKQFDGNGNYTFGLTEQVMFHEIDQDSIDRVRGMDITVVTTAKTDDEGRALLKALGFPFKTEN.

The protein belongs to the universal ribosomal protein uL5 family. Part of the 50S ribosomal subunit; part of the 5S rRNA/L5/L18/L25 subcomplex. Contacts the 5S rRNA and the P site tRNA. Forms a bridge to the 30S subunit in the 70S ribosome.

Functionally, this is one of the proteins that bind and probably mediate the attachment of the 5S RNA into the large ribosomal subunit, where it forms part of the central protuberance. In the 70S ribosome it contacts protein S13 of the 30S subunit (bridge B1b), connecting the 2 subunits; this bridge is implicated in subunit movement. Contacts the P site tRNA; the 5S rRNA and some of its associated proteins might help stabilize positioning of ribosome-bound tRNAs. This chain is Large ribosomal subunit protein uL5, found in Paenarthrobacter aurescens (strain TC1).